The chain runs to 60 residues: MNRLTTIILMLIVINVIMDDISESKVAAGIVCKVCKIICGMQGKKVNICKAPIKCKCKKG.

Residues 1 to 28 form the signal peptide; sequence MNRLTTIILMLIVINVIMDDISESKVAA. 3 disulfide bridges follow: cysteine 32–cysteine 49, cysteine 35–cysteine 55, and cysteine 39–cysteine 57. Lysine 59 carries the post-translational modification Lysine amide.

Expressed by the venom gland.

It is found in the secreted. In terms of biological role, inhibits potassium channels. The sequence is that of Putative potassium channel blocker TXKS1 from Olivierus martensii (Manchurian scorpion).